We begin with the raw amino-acid sequence, 473 residues long: Sulfhydrylase-like protein lolC1 (473 aa).

Lys226 is modified (N6-(pyridoxal phosphate)lysine).

This sequence belongs to the trans-sulfuration enzymes family. Pyridoxal 5'-phosphate is required as a cofactor.

It participates in alkaloid biosynthesis. Its function is as follows. Sulfhydrylase-like protein; part of the gene cluster that mediates the biosynthesis of loline alkaloids, potent insecticidal agents composed of a pyrrolizidine ring system and an uncommon ether bridge linking carbons 2 and 7. Lolines are structurally differentiated by the various modifications of the L-amino group and include norloline, loline, N-methylloline, N-acetylloline, N-acetylnorloline, and N-formylloline. The first committed step is the condensation of O-acetyl-L-homoserine (derived from L-aspartic acid) and L-proline, probably catalyzed by the gamma-type pyridoxal 5'-phosphate(PLP)-dependent enzyme lolC, to give the diamino diacid, NACPP. Ensuing cyclization, decarboxylation, and acetylation steps yield 1-exo-acetamidopyrrolizidine (AcAP). LolO is required for installation of the ether bridge upon the pathway intermediate, 1-exo-acetamidopyrrolizidine (AcAP). In sequential 2-oxoglutarate- and O(2)-consuming steps, lolO removes hydrogens from C2 and C7 of AcAP to form both carbon-oxygen bonds in N-acetylnorloline (NANL), the precursor to all other lolines. The enzymes lolD, lolE, lolF and lolT have also been proposed to be involved in the ether-bridge installation. Further processing of the exocyclic moiety of NANL by fungal N-acetamidase (LolN), methyltransferase (LolM), and cytochrome P450 (LolP) enzymes, with occasional involvement of a plant acetyltransferase, generates the other known lolines. LolN transforms NANL to norlonine which is monomethylated and dimethylated to respectively lonine and N-methyllonine (NML) by lolM. LolP catalyzes hydroxylation of the methyl group in N-methylloline (NML) and further oxygenation to N-formylloline (NFL). A plant acetyltransferase is responsible for the acetylation of loline to form N-acetylloline (NAL). LolA might interact with aspartate kinase to prevent feedback inhibition of its activity by these end products and thereby promote production of L-homoserine from L-aspartate. In Epichloe uncinata (Endophyte fungus), this protein is Sulfhydrylase-like protein lolC1.